The following is a 115-amino-acid chain: Parathyroid hormone (115 aa).

Positions 1–25 (MMSAKDMVKVMIVMLAICFLARSDG) are cleaved as a signal peptide. Positions 26 to 31 (KSVKKR) are excised as a propeptide. The important for receptor binding stretch occupies residues 51-69 (RVEWLRKKLQDVHNFVALG). A disordered region spans residues 77–99 (GSSQRPRKKEDNVLVESHQKSLG). Basic and acidic residues predominate over residues 84–99 (KKEDNVLVESHQKSLG).

The protein belongs to the parathyroid hormone family. Interacts with PTH1R (via N-terminal extracellular domain).

Its subcellular location is the secreted. Functionally, parathyroid hormone elevates calcium level by dissolving the salts in bone and preventing their renal excretion. Acts by binding to its receptor, PTH1R, activating G protein-coupled receptor signaling. Stimulates [1-14C]-2-deoxy-D-glucose (2DG) transport and glycogen synthesis in osteoblastic cells. This is Parathyroid hormone from Bos taurus (Bovine).